The primary structure comprises 307 residues: Acetaldehyde dehydrogenase (307 aa).

12–15 contributes to the NAD(+) binding site; that stretch reads SGNI. Cys127 acts as the Acyl-thioester intermediate in catalysis. NAD(+) is bound by residues 158-166 and Asn278; that span reads SAGPGTRQN.

The protein belongs to the acetaldehyde dehydrogenase family. Monomer. Can also form a heterotetramer composed of two aldolase (TTHB246) and two dehydrogenase (TTHB247) subunits. Upon complex formation, the aldolase shows a 5-fold increase in substrate affinity, while the dehydrogenase shows a 3-fold decrease; the kcat values of each enzyme are reduced by 2-fold when they are in a complex.

The enzyme catalyses acetaldehyde + NAD(+) + CoA = acetyl-CoA + NADH + H(+). It catalyses the reaction propanal + NAD(+) + CoA = propanoyl-CoA + NADH + H(+). Its function is as follows. Catalyzes the conversion of acetaldehyde or propanal to acetyl-CoA or propanoyl-CoA, respectively, using NAD(+) and coenzyme A. The aldehyde substrates can be directly channeled from the aldolase TTHB246 to the dehydrogenase TTHB247. Is the final enzyme in the meta-cleavage pathway for the degradation of aromatic compounds. This chain is Acetaldehyde dehydrogenase, found in Thermus thermophilus (strain ATCC 27634 / DSM 579 / HB8).